A 93-amino-acid chain; its full sequence is Consomatin G1 (93 aa).

The N-terminal stretch at 1 to 22 is a signal peptide; sequence MQTAYWVMLMMMVCITAPLPEG. Positions 23-69 are excised as a propeptide; that stretch reads GKPNSGIRGLVPNDLTPQHTLRSLISRRQTDVLLDATLLTTPAPEQR. Residues cysteine 72 and cysteine 77 are joined by a disulfide bond. At tryptophan 74 the chain carries D-tryptophan. The propeptide occupies 79–93; sequence PRPYPWRRRDLNGKR.

Belongs to the conotoxin C superfamily. Consomatin family. As to expression, expressed by the venom duct.

Its subcellular location is the secreted. Its function is as follows. Potently activates human somatostatin receptors (SSTR) with a specific activation of SSTR2 (EC(50)=2.6 nM). The protein is Consomatin G1 of Conus geographus (Geography cone).